A 594-amino-acid chain; its full sequence is MATFRSEFNSVPNTYNQRLTALKKKLTTCFQQWRQQLLKLHQQQQQPKQQQQQQQHQSQHQHQQQKQKQRGSEHFYNIFVRADCSILSEKVTYLRKFKRIFTARQNLASARTAATAASAKQPVLGRCIGQEEQQLQIVASLFSSTLISKHSSSASITSSSMTIMDNTYIGVRDEYPDIDTEIRSILLANAQNGITISSIKKEYRQLTGTAFPLHDNITDFLLTIPHVTAECCESGKRIFNIKPTEHTRHLHEMILQQRQRDSVSNPIQAQEPPRLWRAQYKRRIPQHFNFNLNTSEKPPAVKISKLQPLATAAAMSNDVYQDNWKHLNNQYQLPQLNAPKNNIHSHIASNPAQLQAALPAEHHPSKHVEEYAHKRRHEYTRTPTTLSCPSTQHDSMFTINSDYDAYLLDFPLLGDDFFLYLARMELKCRFKKFEKVLQSGLCISGQTINAARQRLRLVELPEMTQIIVNIGSEDIMRGRSLVQIEHDFRLLVKEMHNRRFVPVLTTLAPLANCRHDKQTCDKVSRFNKFIRSEGRHLKVIDIHSCLINENGIVRFDCFQNGPRSVTGSSEPYVFWNKIGRQRVLHMIEENLEYY.

Residues 44–62 (QQQPKQQQQQQQHQSQHQH) show a composition bias toward low complexity. Residues 44-68 (QQQPKQQQQQQQHQSQHQHQQQKQK) form a disordered region. The HTH OST-type domain occupies 174–243 (EYPDIDTEIR…SGKRIFNIKP (70 aa)).

In terms of assembly, interacts with smaug (smg). Posterior pole of the oocyte.

Its function is as follows. Organizes the germ plasm and directs localization of the posterior determinant nanos. Oskar protein is required to keep oskar RNA and staufen protein at the posterior pole. The polypeptide is Maternal effect protein oskar (osk) (Drosophila virilis (Fruit fly)).